A 294-amino-acid chain; its full sequence is Glyceraldehyde-3-phosphate dehydrogenase (294 aa).

3 residues coordinate NAD(+): Asp-19, Lys-63, and Thr-105. Residues 134–136, Thr-165, 194–195, and Arg-217 contribute to the D-glyceraldehyde 3-phosphate site; these read SCT and TG. Catalysis depends on Cys-135, which acts as the Nucleophile.

It belongs to the glyceraldehyde-3-phosphate dehydrogenase family. As to quaternary structure, homotetramer.

The protein resides in the cytoplasm. It catalyses the reaction D-glyceraldehyde 3-phosphate + phosphate + NAD(+) = (2R)-3-phospho-glyceroyl phosphate + NADH + H(+). Its pathway is carbohydrate degradation; glycolysis; pyruvate from D-glyceraldehyde 3-phosphate: step 1/5. In terms of biological role, catalyzes the oxidative phosphorylation of glyceraldehyde 3-phosphate (G3P) to 1,3-bisphosphoglycerate (BPG) using the cofactor NAD. The first reaction step involves the formation of a hemiacetal intermediate between G3P and a cysteine residue, and this hemiacetal intermediate is then oxidized to a thioester, with concomitant reduction of NAD to NADH. The reduced NADH is then exchanged with the second NAD, and the thioester is attacked by a nucleophilic inorganic phosphate to produce BPG. The polypeptide is Glyceraldehyde-3-phosphate dehydrogenase (gap) (Klebsiella aerogenes (Enterobacter aerogenes)).